Here is a 364-residue protein sequence, read N- to C-terminus: Coproporphyrin III ferrochelatase (364 aa).

Fe-coproporphyrin III-binding residues include R29 and Y118. Residues H169 and E250 each contribute to the Fe(2+) site.

The protein belongs to the ferrochelatase family.

It is found in the cytoplasm. The catalysed reaction is Fe-coproporphyrin III + 2 H(+) = coproporphyrin III + Fe(2+). It functions in the pathway porphyrin-containing compound metabolism; protoheme biosynthesis. In terms of biological role, involved in coproporphyrin-dependent heme b biosynthesis. Catalyzes the insertion of ferrous iron into coproporphyrin III to form Fe-coproporphyrin III. The sequence is that of Coproporphyrin III ferrochelatase from Streptococcus pneumoniae (strain Taiwan19F-14).